A 626-amino-acid chain; its full sequence is Putative ankyrin repeat protein L768 (626 aa).

5 ANK repeats span residues 217 to 246 (NLYDVFKYACSRGKLHIIDYLLDKRIEYDF), 333 to 362 (DLDMIIVMAIEFNSMELINWCMNNGININK), 421 to 451 (TAENIIHNIIENRPHIEILKYLLTEVQTEHI), 515 to 545 (SNLKILFVTIMTDNIDILEFLLEINKYNQDY), and 547 to 571 (QWALIFSSNNITILEYIINNTNVNP).

This is Putative ankyrin repeat protein L768 from Acanthamoeba polyphaga mimivirus (APMV).